The primary structure comprises 112 residues: Mitochondrial import inner membrane translocase subunit TIM14-1 (112 aa).

The residue at position 2 (Ala-2) is an N-acetylalanine. Residues 7-23 (AGVAVAATALAGRYGIQ) traverse the membrane as a helical segment. Positions 53-112 (EAALILGVRESVAAEKVKEAHRKVMVANHPDAGGSHFLASKINEAKDVMLGKTKNSGSAF) constitute a J domain.

The protein belongs to the TIM14 family. As to quaternary structure, probable component of the PAM complex at least composed of a mitochondrial HSP70 protein, TIMM44 and TIMM14. The complex interacts with the TIMM23 component of the TIM17:23 complex.

The protein resides in the mitochondrion. It localises to the mitochondrion inner membrane. Its function is as follows. Component of the PAM complex, a complex required for the translocation of transit peptide-containing proteins from the inner membrane into the mitochondrial matrix in an ATP-dependent manner. This Arabidopsis thaliana (Mouse-ear cress) protein is Mitochondrial import inner membrane translocase subunit TIM14-1 (TIM14-1).